Reading from the N-terminus, the 292-residue chain is 5,10-methylenetetrahydrofolate reductase (292 aa).

The Proton donor/acceptor role is filled by Glu28. Residue Thr59 participates in NADH binding. The FAD site is built by Tyr60, Ala62, His88, Arg118, Gly119, Asp120, Ala132, Tyr152, His156, Asp165, Asn168, Lys171, and Lys172. Asp120 lines the (6S)-5-methyl-5,6,7,8-tetrahydrofolate pocket. Residue Gln183 coordinates NADH. Gln183, Gln219, and Lys279 together coordinate (6S)-5-methyl-5,6,7,8-tetrahydrofolate.

Belongs to the methylenetetrahydrofolate reductase family. FAD serves as cofactor.

The catalysed reaction is (6S)-5-methyl-5,6,7,8-tetrahydrofolate + NAD(+) = (6R)-5,10-methylene-5,6,7,8-tetrahydrofolate + NADH + H(+). It functions in the pathway one-carbon metabolism; tetrahydrofolate interconversion. It participates in amino-acid biosynthesis; L-methionine biosynthesis via de novo pathway. In terms of biological role, catalyzes the NADH-dependent reduction of 5,10-methylenetetrahydrofolate to 5-methyltetrahydrofolate. Is required to provide the methyl group necessary for methionine synthetase to convert homocysteine to methionine; the methyl group is given by 5-methyltetrahydrofolate. The polypeptide is 5,10-methylenetetrahydrofolate reductase (metF) (Buchnera aphidicola subsp. Schizaphis graminum (strain Sg)).